A 572-amino-acid polypeptide reads, in one-letter code: Arginine--tRNA ligase (572 aa).

Residues 121–131 (PNLAKEMHVGH) carry the 'HIGH' region motif.

The protein belongs to the class-I aminoacyl-tRNA synthetase family. In terms of assembly, monomer.

The protein localises to the cytoplasm. It catalyses the reaction tRNA(Arg) + L-arginine + ATP = L-arginyl-tRNA(Arg) + AMP + diphosphate. The sequence is that of Arginine--tRNA ligase from Chromobacterium violaceum (strain ATCC 12472 / DSM 30191 / JCM 1249 / CCUG 213 / NBRC 12614 / NCIMB 9131 / NCTC 9757 / MK).